A 417-amino-acid chain; its full sequence is Inner membrane transport protein YnfM (417 aa).

A disordered region spans residues 1-22 (MSRTTTVDGAPASDTDKQSISQ). Topologically, residues 1 to 38 (MSRTTTVDGAPASDTDKQSISQPNQFIKRGTPQFMRVT) are periplasmic. Residues 39–59 (LALFSAGLATFALLYCVQPIL) form a helical membrane-spanning segment. Topologically, residues 60-73 (PVLSQEFGLTPANS) are cytoplasmic. Residues 74-94 (SISLSISTAMLAIGLLFTGPL) traverse the membrane as a helical segment. The Periplasmic portion of the chain corresponds to 95–101 (SDAIGRK). The chain crosses the membrane as a helical span at residues 102–122 (PVMVTALLLASICTLLSTMMT). At 123 to 125 (SWH) the chain is on the cytoplasmic side. The helical transmembrane segment at 126 to 146 (GILIMRALIGLSLSGVAAVGM) threads the bilayer. Over 147 to 152 (TYLSEE) the chain is Periplasmic. Residues 153–173 (IHPSFVAFSMGLYISGNSIGG) form a helical membrane-spanning segment. Residues 174-190 (MSGRLISGVFTDFFNWR) are Cytoplasmic-facing. A helical transmembrane segment spans residues 191-211 (IALAAIGCFALASALMFWKIL). Residues 212-241 (PESRHFRPTSLRPKTLFINFRLHWRDRGLP) lie on the Periplasmic side of the membrane. A helical membrane pass occupies residues 242 to 262 (LLFAEGFLLMGSFVTLFNYIG). The Cytoplasmic segment spans residues 263-264 (YR). The chain crosses the membrane as a helical span at residues 265 to 285 (LMLSPWHVSQAVVGLLSLAYL). The Periplasmic segment spans residues 286-315 (TGTWSSPKAGTMTTRYGRGPVMLFSTGVML). The chain crosses the membrane as a helical span at residues 316–336 (FGLLMTLFSSLWLIFAGMLLF). At 337–364 (SAGFFAAHSVASSWIGPRAKRAKGQASS) the chain is on the cytoplasmic side. The chain crosses the membrane as a helical span at residues 365-385 (LYLFSYYLGSSIAGTLGGVFW). At 386–387 (HN) the chain is on the periplasmic side. The helical transmembrane segment at 388–408 (YGWNGVGAFIALMLVIALLVG) threads the bilayer. The Cytoplasmic portion of the chain corresponds to 409 to 417 (TRLHRRLHA).

The protein belongs to the major facilitator superfamily.

It localises to the cell inner membrane. This is Inner membrane transport protein YnfM (ynfM) from Escherichia coli (strain K12).